The following is a 161-amino-acid chain: Nucleotide-binding protein Veis_3464 (161 aa).

It belongs to the YajQ family.

Its function is as follows. Nucleotide-binding protein. This is Nucleotide-binding protein Veis_3464 from Verminephrobacter eiseniae (strain EF01-2).